Reading from the N-terminus, the 192-residue chain is Fe/S biogenesis protein NfuA (192 aa).

2 residues coordinate [4Fe-4S] cluster: Cys149 and Cys152.

Belongs to the NfuA family. As to quaternary structure, homodimer. It depends on [4Fe-4S] cluster as a cofactor.

Involved in iron-sulfur cluster biogenesis. Binds a 4Fe-4S cluster, can transfer this cluster to apoproteins, and thereby intervenes in the maturation of Fe/S proteins. Could also act as a scaffold/chaperone for damaged Fe/S proteins. This Tolumonas auensis (strain DSM 9187 / NBRC 110442 / TA 4) protein is Fe/S biogenesis protein NfuA.